The primary structure comprises 235 residues: Pyridoxine 5'-phosphate synthase (235 aa).

N6 provides a ligand contact to 3-amino-2-oxopropyl phosphate. A 1-deoxy-D-xylulose 5-phosphate-binding site is contributed by 8-9 (DH). R17 contacts 3-amino-2-oxopropyl phosphate. The active-site Proton acceptor is the H42. Residues R44 and H49 each contribute to the 1-deoxy-D-xylulose 5-phosphate site. Residue E69 is the Proton acceptor of the active site. T99 contributes to the 1-deoxy-D-xylulose 5-phosphate binding site. Residue H189 is the Proton donor of the active site. 3-amino-2-oxopropyl phosphate contacts are provided by residues G190 and 211 to 212 (GH).

Belongs to the PNP synthase family. Homooctamer; tetramer of dimers.

It localises to the cytoplasm. It catalyses the reaction 3-amino-2-oxopropyl phosphate + 1-deoxy-D-xylulose 5-phosphate = pyridoxine 5'-phosphate + phosphate + 2 H2O + H(+). Its pathway is cofactor biosynthesis; pyridoxine 5'-phosphate biosynthesis; pyridoxine 5'-phosphate from D-erythrose 4-phosphate: step 5/5. Functionally, catalyzes the complicated ring closure reaction between the two acyclic compounds 1-deoxy-D-xylulose-5-phosphate (DXP) and 3-amino-2-oxopropyl phosphate (1-amino-acetone-3-phosphate or AAP) to form pyridoxine 5'-phosphate (PNP) and inorganic phosphate. The polypeptide is Pyridoxine 5'-phosphate synthase (Chlorobium luteolum (strain DSM 273 / BCRC 81028 / 2530) (Pelodictyon luteolum)).